The following is a 683-amino-acid chain: U4/U6 small nuclear ribonucleoprotein Prp3 (683 aa).

Positions 1 to 87 constitute a PWI domain; it reads MALSKRELDE…HSKSSSDRSR (87 aa). Residues 73–107 are compositionally biased toward basic and acidic residues; it reads GRSSRHSKSSSDRSRKRELKEVFGDDSEISKESSG. The segment at 73–135 is disordered; it reads GRSSRHSKSS…IPGPPSESPG (63 aa). A Glycyl lysine isopeptide (Lys-Gly) (interchain with G-Cter in SUMO2) cross-link involves residue lysine 139. A disordered region spans residues 161-183; it reads SFISPPAPQPKTPSSSQPERLPI. The residue at position 164 (serine 164) is a Phosphoserine. Residues lysine 244 and lysine 252 each participate in a glycyl lysine isopeptide (Lys-Gly) (interchain with G-Cter in SUMO2) cross-link. The segment at 416 to 550 is mediates interaction with SART3; sequence NLVEHPAQLN…VHISVYRVRN (135 aa). Position 619 is a phosphoserine (serine 619).

In terms of assembly, component of the precatalytic spliceosome (spliceosome B complex). Component of the U4/U6-U5 tri-snRNP complex, a building block of the precatalytic spliceosome (spliceosome B complex). The U4/U6-U5 tri-snRNP complex is composed of the U4, U6 and U5 snRNAs and at least PRPF3, PRPF4, PRPF6, PRPF8, PRPF31, SNRNP200, TXNL4A, SNRNP40, SNRPB, SNRPD1, SNRPD2, SNRPD3, SNRPE, SNRPF, SNRPG, DDX23, CD2BP2, PPIH, SNU13, EFTUD2, SART1 and USP39, plus LSM2, LSM3, LSM4, LSM5, LSM6, LSM7 and LSM8. Interacts directly with PRPF4. Part of a heteromeric complex containing PPIH, PRPF3 and PRPF4 that is stable in the absence of RNA. Interacts with SART3; the interaction is direct and recruits the deubiquitinase USP4 to PRPF3. Interacts with PRPF19. Interacts ('Lys-63'-linked polyubiquitinated) with PRPF8 (via the MPN (JAB/Mov34) domain); may stabilize the U4/U6-U5 tri-snRNP complex. Interacts with ERCC6. In terms of processing, ubiquitinated. Undergoes 'Lys-63'-linked polyubiquitination by PRPF19 and deubiquitination by USP4. 'Lys-63'-linked ubiquitination increases the affinity for PRPF8 and may regulate the assembly of the U4/U6-U5 tri-snRNP complex.

Its subcellular location is the nucleus. The protein resides in the nucleus speckle. In terms of biological role, plays a role in pre-mRNA splicing as component of the U4/U6-U5 tri-snRNP complex that is involved in spliceosome assembly, and as component of the precatalytic spliceosome (spliceosome B complex). In Mus musculus (Mouse), this protein is U4/U6 small nuclear ribonucleoprotein Prp3 (Prpf3).